Consider the following 161-residue polypeptide: Phosphopantetheine adenylyltransferase (161 aa).

S9 contributes to the substrate binding site. Residues 9–10 (SF) and H17 contribute to the ATP site. Residues K41, T73, and R87 each coordinate substrate. Residues 88–90 (GIR), E98, and 123–129 (YQYVSSS) each bind ATP.

Belongs to the bacterial CoaD family. In terms of assembly, homohexamer. The cofactor is Mg(2+).

Its subcellular location is the cytoplasm. The enzyme catalyses (R)-4'-phosphopantetheine + ATP + H(+) = 3'-dephospho-CoA + diphosphate. It functions in the pathway cofactor biosynthesis; coenzyme A biosynthesis; CoA from (R)-pantothenate: step 4/5. In terms of biological role, reversibly transfers an adenylyl group from ATP to 4'-phosphopantetheine, yielding dephospho-CoA (dPCoA) and pyrophosphate. This Levilactobacillus brevis (strain ATCC 367 / BCRC 12310 / CIP 105137 / JCM 1170 / LMG 11437 / NCIMB 947 / NCTC 947) (Lactobacillus brevis) protein is Phosphopantetheine adenylyltransferase.